Reading from the N-terminus, the 56-residue chain is Large ribosomal subunit protein bL32 (56 aa).

The span at 1–16 shows a compositional bias: basic residues; the sequence is MAVQKSKKSRSMRGMR. Positions 1-21 are disordered; it reads MAVQKSKKSRSMRGMRRSHDA.

The protein belongs to the bacterial ribosomal protein bL32 family.

This Vibrio atlanticus (strain LGP32) (Vibrio splendidus (strain Mel32)) protein is Large ribosomal subunit protein bL32.